Reading from the N-terminus, the 583-residue chain is CTP synthase (583 aa).

The tract at residues 1–278 (MRRHPQTATK…DAFVVRRLNL (278 aa)) is amidoligase domain. Position 20 (Ser-20) interacts with CTP. Ser-20 serves as a coordination point for UTP. Residues 21–26 (SLGKGL) and Asp-78 each bind ATP. Mg(2+)-binding residues include Asp-78 and Glu-152. Residues 159 to 161 (DIE), 199 to 204 (KTKPTQ), and Lys-235 each bind CTP. UTP is bound by residues 199 to 204 (KTKPTQ) and Lys-235. The Glutamine amidotransferase type-1 domain occupies 303–551 (RIALVGKYVE…VKAAIDYKEG (249 aa)). L-glutamine is bound at residue Gly-366. Catalysis depends on Cys-393, which acts as the Nucleophile; for glutamine hydrolysis. Residues 394–397 (LGLQ), Glu-416, and Arg-477 contribute to the L-glutamine site. Active-site residues include His-524 and Glu-526. The interval 559–583 (PERVSNGAERRDQVGQSIPEPANRG) is disordered.

It belongs to the CTP synthase family. Homotetramer.

The enzyme catalyses UTP + L-glutamine + ATP + H2O = CTP + L-glutamate + ADP + phosphate + 2 H(+). The catalysed reaction is L-glutamine + H2O = L-glutamate + NH4(+). It catalyses the reaction UTP + NH4(+) + ATP = CTP + ADP + phosphate + 2 H(+). The protein operates within pyrimidine metabolism; CTP biosynthesis via de novo pathway; CTP from UDP: step 2/2. Allosterically activated by GTP, when glutamine is the substrate; GTP has no effect on the reaction when ammonia is the substrate. The allosteric effector GTP functions by stabilizing the protein conformation that binds the tetrahedral intermediate(s) formed during glutamine hydrolysis. Inhibited by the product CTP, via allosteric rather than competitive inhibition. Its function is as follows. Catalyzes the ATP-dependent amination of UTP to CTP with either L-glutamine or ammonia as the source of nitrogen. Regulates intracellular CTP levels through interactions with the four ribonucleotide triphosphates. This Mycobacterium marinum (strain ATCC BAA-535 / M) protein is CTP synthase.